Reading from the N-terminus, the 95-residue chain is Co-chaperonin GroES (95 aa).

The protein belongs to the GroES chaperonin family. In terms of assembly, heptamer of 7 subunits arranged in a ring. Interacts with the chaperonin GroEL.

Its subcellular location is the cytoplasm. In terms of biological role, together with the chaperonin GroEL, plays an essential role in assisting protein folding. The GroEL-GroES system forms a nano-cage that allows encapsulation of the non-native substrate proteins and provides a physical environment optimized to promote and accelerate protein folding. GroES binds to the apical surface of the GroEL ring, thereby capping the opening of the GroEL channel. The chain is Co-chaperonin GroES from Clostridium acetobutylicum (strain ATCC 824 / DSM 792 / JCM 1419 / IAM 19013 / LMG 5710 / NBRC 13948 / NRRL B-527 / VKM B-1787 / 2291 / W).